We begin with the raw amino-acid sequence, 872 residues long: Armadillo repeat-containing protein 3 (872 aa).

ARM repeat units follow at residues 15 to 54 (DVFDPLMIESKKAATVVLMLNSPEEEILAKACEAIYKFAL), 57 to 96 (EENKTTLLELGAVEPLTKLLTHEDKIVRRNATMIFGILAS), 98 to 138 (NDVK…NMSA), 140 to 179 (YTSKVQIFEHGGLEPLIRLLSSPDPDVKKNSMECIYNLVQ), 181 to 220 (FQCRAKLQELNAIPPILDLLKSEYPVIQLLALKTLGVIAN), 222 to 262 (KESR…NCLE), 264 to 304 (MDTM…KAAY), 306 to 345 (PENRKLFHEQEVEKCLVALLGSENDGTKIAASQAISAMCE), 346 to 385 (NSGSKDFFNNQGIPQLIQLLKSDNEEVREAAALALANLTT), 388 to 427 (PANANAAAEADGIDPLINLLSSKRDGAIANAATVLTNMAM), 429 to 468 (EPLRLNIQNHDIMHAIISPLRSANTVVQSKAALAVTATAC), and 470 to 509 (VEARTELRNSGGLEPLVELLRSKNDEVRKHASWAVMVCAG). S-palmitoyl cysteine attachment occurs at residues C507 and C518. A disordered region spans residues 610–693 (VSPPSSMEDK…SKGKKEEEKV (84 aa)). Residues 626-635 (RSISSSSSLR) are compositionally biased toward low complexity. Positions 636–646 (RSSKEKNKKNS) are enriched in basic residues. The segment covering 675-693 (ATKEKGWRKSKGKKEEEKV) has biased composition (basic and acidic residues).

Homodimer. Interacts with PIK3C3, PIK3R4 and BECN1. Interacts (via ARM domains) with ATG14. Palmitoylation is important for its function in autophagy. Expressed in skeletal muscle, brain, lung, kidney, prostate and testis. As to expression, mainly expressed in skeletal muscle, liver, spleen and thymus. In terms of tissue distribution, expressed only in the testis among normal tissues but is expressed frequently in various cancer tissues and, particularly, in pancreatic, lung and endometrial cancers.

In terms of biological role, essential for male fertility and sperm motility. During spermatogenesis, promotes the autophagic degradation of excessive ribosomes, providing energy resources for mitochondria and thus ensuring sperm flagellar motility. This chain is Armadillo repeat-containing protein 3 (ARMC3), found in Homo sapiens (Human).